The sequence spans 173 residues: Cytochrome c homolog (173 aa).

The Cytoplasmic segment spans residues 1–8 (MSGKELNK). Residues 9-29 (IVAAILFASLIAMMVGFIANI) traverse the membrane as a helical; Signal-anchor segment. The Periplasmic portion of the chain corresponds to 30–173 (LYKPVLEPKH…LFLKTYVHDK (144 aa)). Heme c contacts are provided by C82, C85, H86, and M148.

It belongs to the cytochrome c family. Post-translationally, binds 1 heme c group covalently per subunit.

Its subcellular location is the cell membrane. In terms of biological role, may be involved in electron transfer from bc1 complex to aa3. The polypeptide is Cytochrome c homolog (cycM) (Rickettsia bellii (strain RML369-C)).